A 78-amino-acid polypeptide reads, in one-letter code: MAPLRGAELVQTPLQLYRYLLRCCRQLPTKGIQEHYKHAVRQSFQVHSDEDNPERIQQIIRRAIEDADWIMNKYKKQN.

Belongs to the complex I LYR family. LYRM9 subfamily.

The polypeptide is LYR motif-containing protein 9 (Lyrm9) (Rattus norvegicus (Rat)).